Reading from the N-terminus, the 163-residue chain is SsrA-binding protein (163 aa).

A compositionally biased stretch (basic and acidic residues) spans 138–157 (EDRRGAIAERESKREMDRAL). Positions 138-163 (EDRRGAIAERESKREMDRALARGRRR) are disordered.

This sequence belongs to the SmpB family.

It localises to the cytoplasm. Its function is as follows. Required for rescue of stalled ribosomes mediated by trans-translation. Binds to transfer-messenger RNA (tmRNA), required for stable association of tmRNA with ribosomes. tmRNA and SmpB together mimic tRNA shape, replacing the anticodon stem-loop with SmpB. tmRNA is encoded by the ssrA gene; the 2 termini fold to resemble tRNA(Ala) and it encodes a 'tag peptide', a short internal open reading frame. During trans-translation Ala-aminoacylated tmRNA acts like a tRNA, entering the A-site of stalled ribosomes, displacing the stalled mRNA. The ribosome then switches to translate the ORF on the tmRNA; the nascent peptide is terminated with the 'tag peptide' encoded by the tmRNA and targeted for degradation. The ribosome is freed to recommence translation, which seems to be the essential function of trans-translation. The sequence is that of SsrA-binding protein from Anaeromyxobacter dehalogenans (strain 2CP-1 / ATCC BAA-258).